Reading from the N-terminus, the 204-residue chain is Casparian strip membrane protein 2 (204 aa).

The Cytoplasmic portion of the chain corresponds to Met-1–Arg-41. The helical transmembrane segment at Gly-42–Ala-62 threads the bilayer. Topologically, residues Gly-63 to Gln-92 are extracellular. A helical membrane pass occupies residues Phe-93–Val-113. Topologically, residues Val-114–Arg-125 are cytoplasmic. The helical transmembrane segment at Leu-126–Ala-146 threads the bilayer. Residues Ala-147–Gly-178 are Extracellular-facing. A helical transmembrane segment spans residues Ala-179–Val-199. Residues Ala-200 to His-204 are Cytoplasmic-facing.

Belongs to the Casparian strip membrane proteins (CASP) family. As to quaternary structure, homodimer and heterodimers.

The protein resides in the cell membrane. Functionally, regulates membrane-cell wall junctions and localized cell wall deposition. Required for establishment of the Casparian strip membrane domain (CSD) and the subsequent formation of Casparian strips, a cell wall modification of the root endodermis that determines an apoplastic barrier between the intraorganismal apoplasm and the extraorganismal apoplasm and prevents lateral diffusion. This Raphanus sativus (Radish) protein is Casparian strip membrane protein 2.